A 63-amino-acid polypeptide reads, in one-letter code: UPF0434 protein BAV2101 (63 aa).

The protein belongs to the UPF0434 family.

The sequence is that of UPF0434 protein BAV2101 from Bordetella avium (strain 197N).